The primary structure comprises 66 residues: UPF0337 protein SpyM3_1723 (66 aa).

Residues 1–10 are compositionally biased toward basic and acidic residues; that stretch reads MSEEKLKSKI. The interval 1 to 23 is disordered; that stretch reads MSEEKLKSKIEQASGGLKEGAGK.

It belongs to the UPF0337 (CsbD) family.

The sequence is that of UPF0337 protein SpyM3_1723 from Streptococcus pyogenes serotype M3 (strain ATCC BAA-595 / MGAS315).